Reading from the N-terminus, the 173-residue chain is Thiol-disulfide oxidoreductase ResA (173 aa).

The helical; Signal-anchor for type II membrane protein transmembrane segment at 10-29 (VIILLILSGAVGFTLYQGFF) threads the bilayer. Positions 35 to 173 (MQIGKEAPNF…LEGYLKKITP (139 aa)) constitute a Thioredoxin domain. A disulfide bond links C73 and C76.

The protein belongs to the thioredoxin family. ResA subfamily.

It localises to the cell membrane. It functions in the pathway protein modification; cytochrome c assembly. In terms of biological role, thiol-disulfide oxidoreductase which is required in disulfide reduction during c-type cytochrome synthesis. May accept reducing equivalents from CcdA, leading to breakage of disulfide bonds in apocytochrome c; following this reduction heme can be covalently attached. In Bacillus thuringiensis (strain Al Hakam), this protein is Thiol-disulfide oxidoreductase ResA.